Reading from the N-terminus, the 512-residue chain is Altronate oxidoreductase (512 aa).

26-37 contacts NAD(+); the sequence is VLQFGEGNFLRG.

It belongs to the mannitol dehydrogenase family. UxaB subfamily.

The enzyme catalyses D-altronate + NAD(+) = keto-D-tagaturonate + NADH + H(+). Its pathway is carbohydrate metabolism; pentose and glucuronate interconversion. The chain is Altronate oxidoreductase from Halalkalibacterium halodurans (strain ATCC BAA-125 / DSM 18197 / FERM 7344 / JCM 9153 / C-125) (Bacillus halodurans).